The chain runs to 352 residues: Ion-translocating oxidoreductase complex subunit D (352 aa).

The next 5 helical transmembrane spans lie at 20–40, 42–62, 78–109, 123–143, and 148–168; these read IMLL…WFFG, GTLV…ALVL, ALLT…VIIA, PAMI…TSWL, and IAVN…GHTA. Thr-187 bears the FMN phosphoryl threonine mark. 5 consecutive transmembrane segments (helical) span residues 214-234, 242-262, 267-287, 301-321, and 322-342; these read ILAG…GVWL, WHIP…GWLF, LAAP…FFIL, LIFG…GGYP, and DGVA…DYYT.

Belongs to the NqrB/RnfD family. In terms of assembly, the complex is composed of six subunits: RsxA, RsxB, RsxC, RsxD, RsxE and RsxG. Requires FMN as cofactor.

Its subcellular location is the cell inner membrane. Its function is as follows. Part of a membrane-bound complex that couples electron transfer with translocation of ions across the membrane. Required to maintain the reduced state of SoxR. This Shigella dysenteriae serotype 1 (strain Sd197) protein is Ion-translocating oxidoreductase complex subunit D.